A 71-amino-acid polypeptide reads, in one-letter code: Translational regulator CsrA (71 aa).

The disordered stretch occupies residues 50-71 (RIRHEKDGDVPEAAPGQGADPQ).

The protein belongs to the CsrA/RsmA family. Homodimer; the beta-strands of each monomer intercalate to form a hydrophobic core, while the alpha-helices form wings that extend away from the core.

The protein resides in the cytoplasm. In terms of biological role, a key translational regulator that binds mRNA to regulate translation initiation and/or mRNA stability. Mediates global changes in gene expression, shifting from rapid growth to stress survival by linking envelope stress, the stringent response and the catabolite repression systems. Usually binds in the 5'-UTR; binding at or near the Shine-Dalgarno sequence prevents ribosome-binding, repressing translation, binding elsewhere in the 5'-UTR can activate translation and/or stabilize the mRNA. Its function is antagonized by small RNA(s). The protein is Translational regulator CsrA of Halorhodospira halophila (strain DSM 244 / SL1) (Ectothiorhodospira halophila (strain DSM 244 / SL1)).